The primary structure comprises 521 residues: Nitric oxide reductase transcription regulator NorR2 (521 aa).

A 4-aspartylphosphate modification is found at Asp-56. A Sigma-54 factor interaction domain is found at 193–422; that stretch reads IIGQSEAIAN…LEHVISRAAL (230 aa). Residues 221–228 and 293–302 contribute to the ATP site; these read GETGVGKE and EVGELPLAIQ. Residues 497 to 516 constitute a DNA-binding region (H-T-H motif); sequence WAQAARQLGIDASNLHKLAR.

Its pathway is nitrogen metabolism; nitrate reduction (denitrification) [regulation]. Functionally, required for the nitric oxide (NO) induced expression of NO reductase. Not required for expression of 2 other pathway members, nitrate reductase (nirS) and nitrous oxide reductase (nosZ). The protein is Nitric oxide reductase transcription regulator NorR2 (norR2) of Cupriavidus necator (strain ATCC 17699 / DSM 428 / KCTC 22496 / NCIMB 10442 / H16 / Stanier 337) (Ralstonia eutropha).